The sequence spans 251 residues: CDP-diacylglycerol pyrophosphatase (251 aa).

The helical transmembrane segment at 4 to 24 (AGLLFLVMIVIAVVAAGIGYW) threads the bilayer.

The protein belongs to the Cdh family.

The protein localises to the cell inner membrane. The catalysed reaction is a CDP-1,2-diacyl-sn-glycerol + H2O = a 1,2-diacyl-sn-glycero-3-phosphate + CMP + 2 H(+). Its pathway is phospholipid metabolism; CDP-diacylglycerol degradation; phosphatidate from CDP-diacylglycerol: step 1/1. The protein is CDP-diacylglycerol pyrophosphatase of Escherichia coli (strain K12 / MC4100 / BW2952).